A 488-amino-acid chain; its full sequence is Inosine-5'-monophosphate dehydrogenase (488 aa).

2 consecutive CBS domains span residues 95 to 153 (VITN…SIKI) and 157 to 213 (MTKE…PHAA). NAD(+)-binding positions include aspartate 250 and 300 to 302 (GIG). 2 residues coordinate K(+): glycine 302 and glycine 304. IMP is bound at residue serine 305. Cysteine 307 contributes to the K(+) binding site. The Thioimidate intermediate role is filled by cysteine 307. Residues 340-342 (DGG), 363-364 (GS), and 387-391 (YRGMG) each bind IMP. Arginine 403 (proton acceptor) is an active-site residue. Position 417 (glutamate 417) interacts with IMP. The segment at 467–488 (AGLAESHPHNVQITKESPNYSF) is disordered. K(+) is bound by residues glutamate 471, serine 472, and histidine 473. Positions 475-488 (HNVQITKESPNYSF) are enriched in polar residues.

Belongs to the IMPDH/GMPR family. As to quaternary structure, homotetramer. It depends on K(+) as a cofactor.

The enzyme catalyses IMP + NAD(+) + H2O = XMP + NADH + H(+). It functions in the pathway purine metabolism; XMP biosynthesis via de novo pathway; XMP from IMP: step 1/1. With respect to regulation, mycophenolic acid (MPA) is a non-competitive inhibitor that prevents formation of the closed enzyme conformation by binding to the same site as the amobile flap. In contrast, mizoribine monophosphate (MZP) is a competitive inhibitor that induces the closed conformation. MPA is a potent inhibitor of mammalian IMPDHs but a poor inhibitor of the bacterial enzymes. MZP is a more potent inhibitor of bacterial IMPDH. Functionally, catalyzes the conversion of inosine 5'-phosphate (IMP) to xanthosine 5'-phosphate (XMP), the first committed and rate-limiting step in the de novo synthesis of guanine nucleotides, and therefore plays an important role in the regulation of cell growth. In Staphylococcus haemolyticus (strain JCSC1435), this protein is Inosine-5'-monophosphate dehydrogenase.